The chain runs to 223 residues: Imidazoleglycerol-phosphate dehydratase (223 aa).

The protein belongs to the imidazoleglycerol-phosphate dehydratase family.

It catalyses the reaction D-erythro-1-(imidazol-4-yl)glycerol 3-phosphate = 3-(imidazol-4-yl)-2-oxopropyl phosphate + H2O. The protein operates within amino-acid biosynthesis; L-histidine biosynthesis; L-histidine from 5-phospho-alpha-D-ribose 1-diphosphate: step 6/9. This is Imidazoleglycerol-phosphate dehydratase (HIS3) from Candida albicans (Yeast).